Reading from the N-terminus, the 173-residue chain is Alpha-crystallin A chain (173 aa).

At Met1 the chain carries N-acetylmethionine. Residues 1-63 (MDVTIQHPWF…RTVLDSGISE (63 aa)) are required for complex formation with BFSP1 and BFSP2. A Deamidated glutamine; partial modification is found at Gln6. Phosphoserine is present on Ser45. Deamidated glutamine; partial is present on Gln50. Positions 52–162 (LFRTVLDSGI…GHSERAIPVS (111 aa)) constitute a sHSP domain. N6-acetyllysine occurs at positions 70 and 99. His100 contacts Zn(2+). Deamidated asparagine; partial is present on Asn101. Zn(2+) is bound by residues Glu102 and His107. The residue at position 122 (Ser122) is a Phosphoserine. The residue at position 123 (Asn123) is a Deamidated asparagine; partial. Positions 145-173 (KVQSGLDAGHSERAIPVSREEKPSSAPSS) are disordered. At Gln147 the chain carries Deamidated glutamine; partial. Residues 153-167 (GHSERAIPVSREEKP) are compositionally biased toward basic and acidic residues. His154 provides a ligand contact to Zn(2+). Ser162 carries an O-linked (GlcNAc) serine glycan.

This sequence belongs to the small heat shock protein (HSP20) family. In terms of assembly, heteromer composed of three CRYAA and one CRYAB subunits. Inter-subunit bridging via zinc ions enhances stability, which is crucial as there is no protein turn over in the lens. Can also form homodimers and homotetramers (dimers of dimers) which serve as the building blocks of homooligomers. Within homooligomers, the zinc-binding motif is created from residues of 3 different molecules. His-100 and Glu-102 from one molecule are ligands of the zinc ion, and His-107 and His-154 residues from additional molecules complete the site with tetrahedral coordination geometry. Part of a complex required for lens intermediate filament formation composed of BFSP1, BFSP2 and CRYAA. Post-translationally, acetylation at Lys-70 may increase chaperone activity. Undergoes age-dependent proteolytical cleavage at the C-terminus.

The protein localises to the cytoplasm. It is found in the nucleus. Functionally, contributes to the transparency and refractive index of the lens. Acts as a chaperone, preventing aggregation of various proteins under a wide range of stress conditions. Required for the correct formation of lens intermediate filaments as part of a complex composed of BFSP1, BFSP2 and CRYAA. In Meriones unguiculatus (Mongolian jird), this protein is Alpha-crystallin A chain (CRYAA).